The chain runs to 297 residues: rRNA 2'-O-methyltransferase fibrillarin (297 aa).

Residues 1 to 56 (MRGGFGRGGGGRGGSRGGRGGFGRGGGRGGGRGGGRGGGRGGGRGGGRGGGRGGAG) form a disordered region. Asymmetric dimethylarginine occurs at positions 2, 7, 12, 16, 19, 24, 28, 32, 36, 40, 44, 48, and 52. S-adenosyl-L-methionine-binding positions include 149–150 (TT), 168–169 (EF), 192–193 (DA), and 212–215 (DVAQ).

The protein belongs to the methyltransferase superfamily. Fibrillarin family. Component of box C/D small nucleolar ribonucleoprotein (snoRNP) particles. It is associated with the U3, U8 and U13 small nuclear RNAs. In terms of processing, by homology to other fibrillarins, some or all of the N-terminal domain arginines are modified to asymmetric dimethylarginine (DMA).

It localises to the nucleus. It is found in the nucleolus. The enzyme catalyses L-glutaminyl-[histone H2A] + S-adenosyl-L-methionine = N(5)-methyl-L-glutaminyl-[histone H2A] + S-adenosyl-L-homocysteine + H(+). Its function is as follows. S-adenosyl-L-methionine-dependent methyltransferase that has the ability to methylate both RNAs and proteins. Involved in pre-rRNA processing. Utilizes the methyl donor S-adenosyl-L-methionine to catalyze the site-specific 2'-hydroxyl methylation of ribose moieties in pre-ribosomal RNA. Site specificity is provided by a guide RNA that base pairs with the substrate. Methylation occurs at a characteristic distance from the sequence involved in base pairing with the guide RNA. Also acts as a protein methyltransferase by mediating methylation of 'Gln-105' of histone H2A (H2AQ105me), a modification that impairs binding of the FACT complex and is specifically present at 35S ribosomal DNA locus. The protein is rRNA 2'-O-methyltransferase fibrillarin of Leishmania major.